The chain runs to 382 residues: MSTYTRPVMLLLSGLLLLTLAIAVLNTLVPLWLAQEHMSTWQVGVVSSSYFTGNLVGTLLTGYVIKRIGFNRSYYLASFIFAAGCAGLGLMIGFWSWLAWRFVAGVGCAMIWVVVESALMCSGTSRNRGRLLAAYMMVYYVGTFLGQLLVSKVSTELMSVLPWVTGLTLAGILPLLFTRVLNQQAENHDSTSITSMLKLRQARLGVNGCIISGIVLGSLYGLMPLYLNHKGVSNASIGFWMAVLVSAGILGQWPIGRLADKFGRLLVLRVQVFVVILGSIAMLSQAAMAPALFILGAAGFTLYPVAMAWACEKVEHHQLVAMNQALLLSYTVGSLLGPSFTAMLMQNFSDNLLFIMIASVSFIYLLMLLRNAGHTPKPVAHV.

Helical transmembrane passes span 14–34 (GLLL…LWLA), 45–65 (VVSS…GYVI), 79–99 (FIFA…SWLA), 102–122 (FVAG…LMCS), 131–151 (LLAA…LLVS), 157–177 (LMSV…PLLF), 204–224 (LGVN…GLMP), 235–255 (ASIG…QWPI), 270–290 (VQVF…AMAP), 291–311 (ALFI…AWAC), 325–345 (ALLL…AMLM), and 348–368 (FSDN…LLML).

Belongs to the major facilitator superfamily. YcaD (TC 2.A.1.26) family.

The protein resides in the cell inner membrane. This is an uncharacterized protein from Shigella dysenteriae serotype 1 (strain Sd197).